A 216-amino-acid polypeptide reads, in one-letter code: Uracil-DNA glycosylase (216 aa).

D59 serves as the catalytic Proton acceptor.

The protein belongs to the uracil-DNA glycosylase (UDG) superfamily. UNG family.

Its subcellular location is the cytoplasm. The enzyme catalyses Hydrolyzes single-stranded DNA or mismatched double-stranded DNA and polynucleotides, releasing free uracil.. In terms of biological role, excises uracil residues from the DNA which can arise as a result of misincorporation of dUMP residues by DNA polymerase or due to deamination of cytosine. The chain is Uracil-DNA glycosylase from Staphylococcus epidermidis (strain ATCC 35984 / DSM 28319 / BCRC 17069 / CCUG 31568 / BM 3577 / RP62A).